We begin with the raw amino-acid sequence, 440 residues long: Thymidine phosphorylase (440 aa).

Belongs to the thymidine/pyrimidine-nucleoside phosphorylase family. As to quaternary structure, homodimer.

The enzyme catalyses thymidine + phosphate = 2-deoxy-alpha-D-ribose 1-phosphate + thymine. Its pathway is pyrimidine metabolism; dTMP biosynthesis via salvage pathway; dTMP from thymine: step 1/2. In terms of biological role, the enzymes which catalyze the reversible phosphorolysis of pyrimidine nucleosides are involved in the degradation of these compounds and in their utilization as carbon and energy sources, or in the rescue of pyrimidine bases for nucleotide synthesis. The protein is Thymidine phosphorylase of Shigella dysenteriae serotype 1 (strain Sd197).